The chain runs to 113 residues: UPF0482 protein YnfB (113 aa).

The signal sequence occupies residues 1 to 28 (MKITLSKRIGLLAFLLPCALALSTTVHA).

Belongs to the UPF0482 family.

The protein is UPF0482 protein YnfB of Escherichia coli O127:H6 (strain E2348/69 / EPEC).